The sequence spans 504 residues: uncharacterized protein (504 aa).

The protein to M.thermoautotrophicum MTH1137.

This is an uncharacterized protein from Methanocaldococcus jannaschii (strain ATCC 43067 / DSM 2661 / JAL-1 / JCM 10045 / NBRC 100440) (Methanococcus jannaschii).